Consider the following 54-residue polypeptide: Large ribosomal subunit protein bL33B (54 aa).

Belongs to the bacterial ribosomal protein bL33 family.

The chain is Large ribosomal subunit protein bL33B from Mycolicibacterium vanbaalenii (strain DSM 7251 / JCM 13017 / BCRC 16820 / KCTC 9966 / NRRL B-24157 / PYR-1) (Mycobacterium vanbaalenii).